A 403-amino-acid polypeptide reads, in one-letter code: Renin (403 aa).

An N-terminal signal peptide occupies residues 1-22 (MARCRMPRWGLLLVLWGSCTFG). A propeptide spans 23 to 65 (LPADTGAFRRIFLKKMPSIRESLKERGVDVAGLGAEWNQFTKR) (activation peptide). The N-linked (GlcNAc...) asparagine glycan is linked to N70. The Peptidase A1 domain occupies 85–400 (YYGEIGIGTP…DRHNNRIGFA (316 aa)). Residue D103 is part of the active site. A disulfide bond links C116 and C123. N140 carries N-linked (GlcNAc...) asparagine glycosylation. Cysteines 279 and 283 form a disulfide. D288 is an active-site residue. C322 and C359 are oxidised to a cystine.

The protein belongs to the peptidase A1 family. Interacts with ATP6AP2.

It localises to the secreted. The protein resides in the membrane. It carries out the reaction Cleavage of Leu-|-Xaa bond in angiotensinogen to generate angiotensin I.. With respect to regulation, interaction with ATP6AP2 results in a 5-fold increased efficiency in angiotensinogen processing. Renin is a highly specific endopeptidase, whose only known function is to generate angiotensin I from angiotensinogen in the plasma, initiating a cascade of reactions that produce an elevation of blood pressure and increased sodium retention by the kidney. The polypeptide is Renin (REN) (Canis lupus familiaris (Dog)).